Here is a 414-residue protein sequence, read N- to C-terminus: Esterase FrsA (414 aa).

This sequence belongs to the FrsA family.

It catalyses the reaction a carboxylic ester + H2O = an alcohol + a carboxylate + H(+). Catalyzes the hydrolysis of esters. In Escherichia coli O7:K1 (strain IAI39 / ExPEC), this protein is Esterase FrsA.